Consider the following 162-residue polypeptide: Phosphopantetheine adenylyltransferase (162 aa).

Residue Thr9 coordinates substrate. ATP contacts are provided by residues 9–10 and His17; that span reads TF. Positions 41, 77, and 91 each coordinate substrate. ATP contacts are provided by residues 92–94, Glu102, and 127–133; these read GLR and RQAIASK.

The protein belongs to the bacterial CoaD family. In terms of assembly, homohexamer. Mg(2+) is required as a cofactor.

It localises to the cytoplasm. The enzyme catalyses (R)-4'-phosphopantetheine + ATP + H(+) = 3'-dephospho-CoA + diphosphate. The protein operates within cofactor biosynthesis; coenzyme A biosynthesis; CoA from (R)-pantothenate: step 4/5. Its function is as follows. Reversibly transfers an adenylyl group from ATP to 4'-phosphopantetheine, yielding dephospho-CoA (dPCoA) and pyrophosphate. In Cereibacter sphaeroides (strain ATCC 17025 / ATH 2.4.3) (Rhodobacter sphaeroides), this protein is Phosphopantetheine adenylyltransferase.